Here is a 391-residue protein sequence, read N- to C-terminus: Phosphoglycerate kinase (391 aa).

Substrate-binding positions include 21–23, arginine 36, 59–62, arginine 113, and arginine 146; these read DLN and HLGR. Residues lysine 197, glutamate 319, and 345 to 348 contribute to the ATP site; that span reads GGDT.

This sequence belongs to the phosphoglycerate kinase family. Monomer.

The protein localises to the cytoplasm. It catalyses the reaction (2R)-3-phosphoglycerate + ATP = (2R)-3-phospho-glyceroyl phosphate + ADP. It functions in the pathway carbohydrate degradation; glycolysis; pyruvate from D-glyceraldehyde 3-phosphate: step 2/5. The protein is Phosphoglycerate kinase of Colwellia psychrerythraea (strain 34H / ATCC BAA-681) (Vibrio psychroerythus).